The primary structure comprises 566 residues: Serine/threonine-protein kinase ppk14 (566 aa).

Over residues 1-31 (MNELHDGESSEEGRINVEDHLEEAKKDDTGH) the composition is skewed to basic and acidic residues. Disordered stretches follow at residues 1-39 (MNEL…GTAK) and 60-152 (SRKK…EKLK). Residues 74 to 85 (AANQSPSGAPES) show a composition bias toward polar residues. Positions 119–129 (SFFKSGRKKKD) are enriched in basic residues. The segment covering 134-145 (RNVSRSNGADTS) has biased composition (polar residues). Positions 195 to 485 (FEKVFLLGKG…AADVKLHPFF (291 aa)) constitute a Protein kinase domain. ATP is bound by residues 201–209 (LGKGDVGRV) and Lys224. Asp320 functions as the Proton acceptor in the catalytic mechanism. Thr379 carries the phosphothreonine modification. Ser381 bears the Phosphoserine mark. At Thr385 the chain carries Phosphothreonine.

It belongs to the protein kinase superfamily. Ser/Thr protein kinase family. KIN82 subfamily.

The catalysed reaction is L-seryl-[protein] + ATP = O-phospho-L-seryl-[protein] + ADP + H(+). It catalyses the reaction L-threonyl-[protein] + ATP = O-phospho-L-threonyl-[protein] + ADP + H(+). This chain is Serine/threonine-protein kinase ppk14 (ppk14), found in Schizosaccharomyces pombe (strain 972 / ATCC 24843) (Fission yeast).